The chain runs to 197 residues: GTP cyclohydrolase-2 (197 aa).

Residue 50-54 coordinates GTP; the sequence is RIHSE. Residues Cys-55, Cys-66, and Cys-68 each contribute to the Zn(2+) site. GTP contacts are provided by residues Gln-71, 93–95, and Thr-115; that span reads EGR. Catalysis depends on Asp-127, which acts as the Proton acceptor. The active-site Nucleophile is Arg-129. Residues Thr-150 and Lys-155 each coordinate GTP.

The protein belongs to the GTP cyclohydrolase II family. Requires Zn(2+) as cofactor.

It catalyses the reaction GTP + 4 H2O = 2,5-diamino-6-hydroxy-4-(5-phosphoribosylamino)-pyrimidine + formate + 2 phosphate + 3 H(+). Its pathway is cofactor biosynthesis; riboflavin biosynthesis; 5-amino-6-(D-ribitylamino)uracil from GTP: step 1/4. Catalyzes the conversion of GTP to 2,5-diamino-6-ribosylamino-4(3H)-pyrimidinone 5'-phosphate (DARP), formate and pyrophosphate. This chain is GTP cyclohydrolase-2, found in Tolumonas auensis (strain DSM 9187 / NBRC 110442 / TA 4).